Reading from the N-terminus, the 200-residue chain is Small ribosomal subunit protein mS26 (200 aa).

The transit peptide at 1-27 directs the protein to the mitochondrion; the sequence is MLRALNRLAARPGGQPPTLLLLPVRGR. The residue at position 159 (Lys-159) is an N6-acetyllysine.

It belongs to the mitochondrion-specific ribosomal protein mS26 family. Component of the mitochondrial ribosome small subunit (28S) which comprises a 12S rRNA and about 30 distinct proteins.

Its subcellular location is the mitochondrion. The sequence is that of Small ribosomal subunit protein mS26 (Mrps26) from Rattus norvegicus (Rat).